The chain runs to 459 residues: Putrescine aminotransferase (459 aa).

Pyridoxal 5'-phosphate is bound by residues 150–151 and glutamine 274; that span reads GT. Residue lysine 300 is modified to N6-(pyridoxal phosphate)lysine. Pyridoxal 5'-phosphate is bound at residue threonine 332.

This sequence belongs to the class-III pyridoxal-phosphate-dependent aminotransferase family. Putrescine aminotransferase subfamily. The cofactor is pyridoxal 5'-phosphate.

The catalysed reaction is an alkane-alpha,omega-diamine + 2-oxoglutarate = an omega-aminoaldehyde + L-glutamate. It catalyses the reaction putrescine + 2-oxoglutarate = 1-pyrroline + L-glutamate + H2O. The enzyme catalyses cadaverine + 2-oxoglutarate = 5-aminopentanal + L-glutamate. Its pathway is amine and polyamine degradation; putrescine degradation; 4-aminobutanal from putrescine (transaminase route): step 1/1. Catalyzes the aminotransferase reaction from putrescine to 2-oxoglutarate, leading to glutamate and 4-aminobutanal, which spontaneously cyclizes to form 1-pyrroline. This is the first step in one of two pathways for putrescine degradation, where putrescine is converted into 4-aminobutanoate (gamma-aminobutyrate or GABA) via 4-aminobutanal. Also functions as a cadaverine transaminase in a a L-lysine degradation pathway to succinate that proceeds via cadaverine, glutarate and L-2-hydroxyglutarate. The polypeptide is Putrescine aminotransferase (Salmonella dublin (strain CT_02021853)).